The sequence spans 118 residues: MASQSQGIQQLLQAEKRAKDKLEEAKKRKNKRLRQAKEEATADIDQYRLKREGDFRRIQTSVMGSQGNLAVKIEEQTVEKIQLYSSSFHKYKEGVLQQLLDLAYNIKPELHTNFQYKL.

A compositionally biased stretch (polar residues) spans 1 to 12 (MASQSQGIQQLL). The segment at 1 to 37 (MASQSQGIQQLLQAEKRAKDKLEEAKKRKNKRLRQAK) is disordered. Residues 3 to 53 (SQSQGIQQLLQAEKRAKDKLEEAKKRKNKRLRQAKEEATADIDQYRLKREG) are a coiled coil. A compositionally biased stretch (basic and acidic residues) spans 14-26 (AEKRAKDKLEEAK).

Belongs to the V-ATPase G subunit family. V-ATPase is a heteromultimeric enzyme made up of two complexes: the ATP-hydrolytic V1 complex and the proton translocation V0 complex. The V1 complex consists of three catalytic AB heterodimers that form a heterohexamer, three peripheral stalks each consisting of EG heterodimers, one central rotor including subunits D and F, and the regulatory subunits C and H. The proton translocation complex V0 consists of the proton transport subunit a, a ring of proteolipid subunits c9c'', rotary subunit d, subunits e and f, and two accessory subunits.

Subunit of the V1 complex of vacuolar(H+)-ATPase (V-ATPase), a multisubunit enzyme composed of a peripheral complex (V1) that hydrolyzes ATP and a membrane integral complex (V0) that translocates protons. V-ATPase is responsible for acidifying and maintaining the pH of intracellular compartments and in some cell types, is targeted to the plasma membrane, where it is responsible for acidifying the extracellular environment. The sequence is that of V-type proton ATPase subunit G 3 (atp6v1g3) from Xenopus tropicalis (Western clawed frog).